The sequence spans 89 residues: Myrmicitoxin(1)-Pm2a (89 aa).

Positions 1 to 22 (MEIPKLLYIAVIAIGLSGSLTC) are cleaved as a signal peptide. The propeptide occupies 23 to 61 (ATPLANPWGDPEAEANPEAKATAEATAEAIAEALAEPEP). An Asparagine amide modification is found at Asn88.

The protein belongs to the formicidae venom clade 1 family. In terms of tissue distribution, expressed by the venom gland.

The protein localises to the secreted. Its function is as follows. Toxin that potently modulates mammalian voltage-gated sodium (Nav) channels, reducing the voltage threshold for activation and inhibiting channel inactivation. Shows activity on hNav1.6/SCN8A (EC(50)=176 nM), mNav1.7/SCN9A (EC(50)=102 nM) and hNav1.7 (EC(50)=154 nM). In vivo, causes spontaneous, gradual and long-lasting nocifensive behaviors by intraplantar injection in mice, as well as pronounced swelling of the injected paw. Does not have effect on insects (blowflies). The chain is Myrmicitoxin(1)-Pm2a from Pogonomyrmex maricopa (Maricopa harvester ant).